Here is a 920-residue protein sequence, read N- to C-terminus: Phosphoenolpyruvate carboxylase (920 aa).

Active-site residues include His-138 and Lys-583.

It belongs to the PEPCase type 1 family. Requires Mg(2+) as cofactor.

It catalyses the reaction oxaloacetate + phosphate = phosphoenolpyruvate + hydrogencarbonate. Forms oxaloacetate, a four-carbon dicarboxylic acid source for the tricarboxylic acid cycle. The polypeptide is Phosphoenolpyruvate carboxylase (Streptococcus pyogenes serotype M3 (strain ATCC BAA-595 / MGAS315)).